We begin with the raw amino-acid sequence, 598 residues long: Aluminum-activated malate transporter 9 (598 aa).

A run of 6 helical transmembrane segments spans residues 88 to 108 (IVFSAKIGLALTIVALLIFYQ), 117 to 137 (YSVWAILTVVVVFEFTIGATL), 144 to 164 (ALGTLSAGGLALGMAELSTLF), 170 to 190 (IFCTLSIFCIGFLATFMKLYP), 194 to 214 (AYEYGFRVFLLTYCYILISGF), and 227 to 247 (FLLIALGAGVSLGVNMFIYPI).

This sequence belongs to the aromatic acid exporter (TC 2.A.85) family. Expressed in hypocotyls, leaves, roots, flowers, sepals and stamina. In leaves, expressed almost exclusively in mesophyll cells.

It localises to the vacuole membrane. Slow activation by external aluminum. Functionally, vacuolar malate channel. Has a higher selectivity for malate than for fumarate. Also exhibits a weak chloride conductance. This is Aluminum-activated malate transporter 9 (ALMT9) from Arabidopsis thaliana (Mouse-ear cress).